The sequence spans 298 residues: Bifunctional protein FolD (298 aa).

NADP(+) contacts are provided by residues 165-167 (GRS), Ser190, and Ile231.

This sequence belongs to the tetrahydrofolate dehydrogenase/cyclohydrolase family. Homodimer.

It catalyses the reaction (6R)-5,10-methylene-5,6,7,8-tetrahydrofolate + NADP(+) = (6R)-5,10-methenyltetrahydrofolate + NADPH. The catalysed reaction is (6R)-5,10-methenyltetrahydrofolate + H2O = (6R)-10-formyltetrahydrofolate + H(+). It participates in one-carbon metabolism; tetrahydrofolate interconversion. Catalyzes the oxidation of 5,10-methylenetetrahydrofolate to 5,10-methenyltetrahydrofolate and then the hydrolysis of 5,10-methenyltetrahydrofolate to 10-formyltetrahydrofolate. The polypeptide is Bifunctional protein FolD (Prochlorococcus marinus (strain MIT 9312)).